Reading from the N-terminus, the 202-residue chain is Holliday junction branch migration complex subunit RuvA (202 aa).

Residues methionine 1–alanine 64 form a domain I region. Residues glycine 65 to proline 143 are domain II. Residues alanine 144–leucine 152 are flexible linker. The interval valine 153–proline 202 is domain III.

It belongs to the RuvA family. Homotetramer. Forms an RuvA(8)-RuvB(12)-Holliday junction (HJ) complex. HJ DNA is sandwiched between 2 RuvA tetramers; dsDNA enters through RuvA and exits via RuvB. An RuvB hexamer assembles on each DNA strand where it exits the tetramer. Each RuvB hexamer is contacted by two RuvA subunits (via domain III) on 2 adjacent RuvB subunits; this complex drives branch migration. In the full resolvosome a probable DNA-RuvA(4)-RuvB(12)-RuvC(2) complex forms which resolves the HJ.

It localises to the cytoplasm. In terms of biological role, the RuvA-RuvB-RuvC complex processes Holliday junction (HJ) DNA during genetic recombination and DNA repair, while the RuvA-RuvB complex plays an important role in the rescue of blocked DNA replication forks via replication fork reversal (RFR). RuvA specifically binds to HJ cruciform DNA, conferring on it an open structure. The RuvB hexamer acts as an ATP-dependent pump, pulling dsDNA into and through the RuvAB complex. HJ branch migration allows RuvC to scan DNA until it finds its consensus sequence, where it cleaves and resolves the cruciform DNA. The polypeptide is Holliday junction branch migration complex subunit RuvA (Laribacter hongkongensis (strain HLHK9)).